The following is a 575-amino-acid chain: 3-hydroxy-3-methylglutaryl-coenzyme A reductase 1 (575 aa).

Over residues 1 to 13 (MDTTGRLHHRKHA) the composition is skewed to basic residues. The segment at 1-25 (MDTTGRLHHRKHATPVEDRSPTTPK) is disordered. Transmembrane regions (helical) follow at residues 29 to 49 (ALPL…FSVA) and 73 to 93 (EIVA…FFGI). Positions 97–160 (QSFIARASHD…PLIAPLVSEE (64 aa)) are linker. A glycan (N-linked (GlcNAc...) asparagine) is linked at asparagine 132. Residues 161-575 (DEMIVNSVVD…SSKDMSKAAS (415 aa)) form a catalytic region. Glutamate 254 acts as the Charge relay system in catalysis. A glycan (N-linked (GlcNAc...) asparagine) is linked at asparagine 318. Active-site charge relay system residues include lysine 386 and aspartate 462. Residues 531–551 (LLAAIVAGSVLAGELSLMSAI) traverse the membrane as a helical segment. Histidine 560 serves as the catalytic Proton donor. Asparagine 564 carries N-linked (GlcNAc...) asparagine glycosylation.

The protein belongs to the HMG-CoA reductase family.

The protein resides in the endoplasmic reticulum membrane. The protein localises to the mitochondrion membrane. Its subcellular location is the plastid membrane. The catalysed reaction is (R)-mevalonate + 2 NADP(+) + CoA = (3S)-3-hydroxy-3-methylglutaryl-CoA + 2 NADPH + 2 H(+). It functions in the pathway metabolic intermediate biosynthesis; (R)-mevalonate biosynthesis; (R)-mevalonate from acetyl-CoA: step 3/3. Functionally, catalyzes the synthesis of mevalonate. The specific precursor of all isoprenoid compounds present in plants. This is 3-hydroxy-3-methylglutaryl-coenzyme A reductase 1 (HMGR1) from Hevea brasiliensis (Para rubber tree).